Here is a 186-residue protein sequence, read N- to C-terminus: Tumor necrosis factor alpha-induced protein 8-like protein 2 (186 aa).

It belongs to the TNFAIP8 family. TNFAIP8L2 subfamily.

Its function is as follows. Acts as a negative regulator of innate and adaptive immunity by maintaining immune homeostasis. Negative regulator of Toll-like receptor and T-cell receptor function. Prevents hyperresponsiveness of the immune system and maintains immune homeostasis. Inhibits jun/ap1 and NF-kappa-B activation. Promotes Fas-induced apoptosis. The chain is Tumor necrosis factor alpha-induced protein 8-like protein 2 (tnfaip8l2) from Xenopus laevis (African clawed frog).